The primary structure comprises 479 residues: Ribulose bisphosphate carboxylase large chain (479 aa).

Positions 1-2 (MS) are excised as a propeptide. N123 and T173 together coordinate substrate. Residue K175 is the Proton acceptor of the active site. K177 serves as a coordination point for substrate. Positions 201, 203, and 204 each coordinate Mg(2+). Position 201 is an N6-carboxylysine (K201). Residue S208 is modified to Phosphoserine. H294 functions as the Proton acceptor in the catalytic mechanism. The substrate site is built by R295 and H327. T330 is subject to Phosphothreonine. Residue S379 coordinates substrate.

Belongs to the RuBisCO large chain family. Type I subfamily. As to quaternary structure, heterohexadecamer of 8 large chains and 8 small chains; disulfide-linked. The disulfide link is formed within the large subunit homodimers. Requires Mg(2+) as cofactor. The disulfide bond which can form in the large chain dimeric partners within the hexadecamer appears to be associated with oxidative stress and protein turnover.

The protein localises to the plastid. The protein resides in the chloroplast. The enzyme catalyses 2 (2R)-3-phosphoglycerate + 2 H(+) = D-ribulose 1,5-bisphosphate + CO2 + H2O. It catalyses the reaction D-ribulose 1,5-bisphosphate + O2 = 2-phosphoglycolate + (2R)-3-phosphoglycerate + 2 H(+). Functionally, ruBisCO catalyzes two reactions: the carboxylation of D-ribulose 1,5-bisphosphate, the primary event in carbon dioxide fixation, as well as the oxidative fragmentation of the pentose substrate in the photorespiration process. Both reactions occur simultaneously and in competition at the same active site. This Lobularia maritima (Sweet alyssum) protein is Ribulose bisphosphate carboxylase large chain.